Reading from the N-terminus, the 331-residue chain is Nucleotide sugar transporter SLC35B4 (331 aa).

11 consecutive transmembrane segments (helical) span residues 4–24 (ALAV…LELL), 30–50 (GCGN…GFLF), 59–79 (PAIP…VSVV), 92–112 (LHMI…IIIL), 117–137 (SIFK…CTFM), 153–173 (GFQA…ALLM), 201–221 (ALPL…AVLF), 229–249 (IPVI…NIIT), 251–267 (YVCI…CASL), 268–288 (TVTL…ILYF), and 291–311 (PFTL…LMYT). The Mediates endoplasmic reticulum retention motif lies at 326–331 (KDSKKN).

It belongs to the nucleotide-sugar transporter family. SLC35B subfamily.

It localises to the endoplasmic reticulum membrane. It carries out the reaction UDP-N-acetyl-alpha-D-glucosamine(in) + UDP-alpha-D-glucuronate(out) = UDP-N-acetyl-alpha-D-glucosamine(out) + UDP-alpha-D-glucuronate(in). The catalysed reaction is UDP-alpha-D-xylose(in) + UDP-alpha-D-glucuronate(out) = UDP-alpha-D-xylose(out) + UDP-alpha-D-glucuronate(in). Antiporter that transports nucleotide sugars across the endoplasmic reticulum (ER) membrane in exchange for another nucleotide sugar. May couple UDP-alpha-D-glucuronate (UDP-GlcA) or UDP-alpha-D-xylose (UDP-Xyl) efflux to UDP-alpha-D-glucuronate (UDP-GlcA) influx into the ER lumen, which in turn stimulates glucuronidation and excretion of endobiotics and xenobiotics. The protein is Nucleotide sugar transporter SLC35B4 (SLC35B4) of Pongo abelii (Sumatran orangutan).